The primary structure comprises 345 residues: Platelet-derived growth factor C (345 aa).

An N-terminal signal peptide occupies residues 1-22; that stretch reads MLLLGLLLLTSALAGQRTGTRA. Positions 24-33 are enriched in polar residues; sequence SNLSSKLQLS. Residues 24 to 45 form a disordered region; sequence SNLSSKLQLSSDKEQNGVQDPR. Asn25 carries N-linked (GlcNAc...) asparagine glycosylation. The span at 34 to 45 shows a compositional bias: basic and acidic residues; the sequence is SDKEQNGVQDPR. Residues 46-163 form the CUB domain; that stretch reads HERVVTISGN…PGFCIHYSII (118 aa). N-linked (GlcNAc...) asparagine glycosylation is present at Asn55. Intrachain disulfides connect Cys104-Cys124, Cys250-Cys294, Cys280-Cys335, and Cys287-Cys337.

Belongs to the PDGF/VEGF growth factor family. As to quaternary structure, homodimer; disulfide-linked. Interacts with PDGFRA homodimers, and with heterodimers formed by PDGFRA and PDGFRB. Interacts (via CUB domain) with PLAT (via kringle domain). Proteolytic removal of the N-terminal CUB domain releasing the core domain is necessary for unmasking the receptor-binding epitopes of the core domain. Cleavage after basic residues in the hinge region (region connecting the CUB and growth factor domains) gives rise to the receptor-binding form. Cleaved by PLAT and PLG. Post-translationally, sumoylated by SUMO1. In terms of processing, N-glycosylated. In terms of tissue distribution, mainly expressed in kidney, testis, liver, heart and brain (at protein level). Highly expressed in airway epithelium, interstitial cells and alveolar macrophages in the lung of mice overexpressing IL13. Expressed in the ovaries.

It is found in the cytoplasm. The protein resides in the cytosol. Its subcellular location is the secreted. It localises to the nucleus. The protein localises to the cytoplasmic granule. It is found in the cell membrane. Functionally, growth factor that plays an essential role in the regulation of embryonic development, cell proliferation, cell migration, survival and chemotaxis. Potent mitogen and chemoattractant for cells of mesenchymal origin. Required for normal skeleton formation during embryonic development, especially for normal development of the craniofacial skeleton and for normal development of the palate. Required for normal skin morphogenesis during embryonic development. Plays an important role in wound healing, where it appears to be involved in three stages: inflammation, proliferation and remodeling. Plays an important role in angiogenesis and blood vessel development. Involved in fibrotic processes, in which transformation of interstitial fibroblasts into myofibroblasts plus collagen deposition occurs. The CUB domain has mitogenic activity in coronary artery smooth muscle cells, suggesting a role beyond the maintenance of the latency of the PDGF domain. In the nucleus, PDGFC seems to have additional function. In Mus musculus (Mouse), this protein is Platelet-derived growth factor C (Pdgfc).